The following is a 360-amino-acid chain: A-type ATP synthase subunit C (360 aa).

The segment at 1–23 is disordered; the sequence is MRLLERLWGKKPSRKSDKKKKGT. The segment covering 9–22 has biased composition (basic residues); sequence GKKPSRKSDKKKKG.

The protein belongs to the V-ATPase V0D/AC39 subunit family. In terms of assembly, has multiple subunits with at least A(3), B(3), C, D, E, F, H, I and proteolipid K(x).

The protein localises to the cell membrane. In terms of biological role, component of the A-type ATP synthase that produces ATP from ADP in the presence of a proton gradient across the membrane. This Methanosarcina acetivorans (strain ATCC 35395 / DSM 2834 / JCM 12185 / C2A) protein is A-type ATP synthase subunit C.